Reading from the N-terminus, the 235-residue chain is Ribonuclease 3 (235 aa).

An RNase III domain is found at 6-131 (IDQLFKLTGH…LIAVMYLDGG (126 aa)). E44 provides a ligand contact to Mg(2+). D48 is a catalytic residue. Mg(2+) is bound by residues D117 and E120. The active site involves E120. The DRBM domain occupies 156 to 225 (DAKTELQEWA…AEKILRREGV (70 aa)).

The protein belongs to the ribonuclease III family. As to quaternary structure, homodimer. Mg(2+) serves as cofactor.

The protein resides in the cytoplasm. It catalyses the reaction Endonucleolytic cleavage to 5'-phosphomonoester.. Functionally, digests double-stranded RNA. Involved in the processing of primary rRNA transcript to yield the immediate precursors to the large and small rRNAs (23S and 16S). Processes some mRNAs, and tRNAs when they are encoded in the rRNA operon. Processes pre-crRNA and tracrRNA of type II CRISPR loci if present in the organism. In Bartonella tribocorum (strain CIP 105476 / IBS 506), this protein is Ribonuclease 3.